A 277-amino-acid chain; its full sequence is Thymidylate synthase (277 aa).

DUMP is bound at residue Arg27. His57 is a binding site for (6R)-5,10-methylene-5,6,7,8-tetrahydrofolate. DUMP is bound at residue 132–133; that stretch reads RR. Catalysis depends on Cys152, which acts as the Nucleophile. DUMP-binding positions include 179–182, Asn190, and 220–222; these read RSAD and HIY. Residue Asp182 participates in (6R)-5,10-methylene-5,6,7,8-tetrahydrofolate binding. Position 276 (Ala276) interacts with (6R)-5,10-methylene-5,6,7,8-tetrahydrofolate.

This sequence belongs to the thymidylate synthase family. Bacterial-type ThyA subfamily. In terms of assembly, homodimer.

The protein localises to the cytoplasm. It catalyses the reaction dUMP + (6R)-5,10-methylene-5,6,7,8-tetrahydrofolate = 7,8-dihydrofolate + dTMP. It participates in pyrimidine metabolism; dTTP biosynthesis. Catalyzes the reductive methylation of 2'-deoxyuridine-5'-monophosphate (dUMP) to 2'-deoxythymidine-5'-monophosphate (dTMP) while utilizing 5,10-methylenetetrahydrofolate (mTHF) as the methyl donor and reductant in the reaction, yielding dihydrofolate (DHF) as a by-product. This enzymatic reaction provides an intracellular de novo source of dTMP, an essential precursor for DNA biosynthesis. This chain is Thymidylate synthase, found in Acidovorax sp. (strain JS42).